Here is a 388-residue protein sequence, read N- to C-terminus: Na(+)/H(+) antiporter NhaA (388 aa).

Over 1–11 (MKHLHRFFSSD) the chain is Cytoplasmic. Residues 12-31 (ASGGIILIIAAILAMIMANS) traverse the membrane as a helical segment. The Periplasmic segment spans residues 32–58 (GATSGWYHDFLETPVQLRVGSLEINKN). The helical transmembrane segment at 59–80 (MLLWINDALMAVFFLLVGLEVK) threads the bilayer. Residues 81-96 (RELMQGSLASLRQAAF) are Cytoplasmic-facing. The chain crosses the membrane as a helical span at residues 97–116 (PVIAAIGGMIVPALLYLAFN). The Periplasmic segment spans residues 117-122 (YADPIT). The helical transmembrane segment at 123–130 (REGWAIPA) threads the bilayer. The Cytoplasmic portion of the chain corresponds to 131 to 154 (ATDIAFALGVLALLGSRVPLALKI). The chain crosses the membrane as a helical span at residues 155–176 (FLMALAIIDDLGAIIIIALFYT). The Periplasmic portion of the chain corresponds to 177-180 (NDLS). Residues 181-200 (MASLGVAAVAIAVLAVLNLC) traverse the membrane as a helical segment. Residues 201–204 (GVRR) are Cytoplasmic-facing. A helical transmembrane segment spans residues 205–222 (TGVYILVGVVLWTAVLKS). Residue glycine 223 is a topological domain, periplasmic. A helical transmembrane segment spans residues 224 to 236 (VHATLAGVIVGFF). Topologically, residues 237–253 (IPLKEKHGRSPAKRLEH) are cytoplasmic. The chain crosses the membrane as a helical span at residues 254 to 272 (VLHPWVAYLILPLFAFANA). Residues 273-286 (GVSLQGVTLDGLTS) lie on the Periplasmic side of the membrane. A helical transmembrane segment spans residues 287–310 (ILPLGIIAGLLIGKPLGISLFCWL). The Cytoplasmic segment spans residues 311–339 (ALRLKLAHLPEGTTYQQIMAVGILCGIGF). The helical transmembrane segment at 340 to 350 (TMSIFIASLAF) threads the bilayer. Topologically, residues 351-357 (GSVDPEL) are periplasmic. Residues 358–380 (INWAKLGILVGSISSAVIGYSWL) traverse the membrane as a helical segment. The Cytoplasmic segment spans residues 381–388 (RVRLRPSV).

Belongs to the NhaA Na(+)/H(+) (TC 2.A.33) antiporter family.

It localises to the cell inner membrane. It carries out the reaction Na(+)(in) + 2 H(+)(out) = Na(+)(out) + 2 H(+)(in). Na(+)/H(+) antiporter that extrudes sodium in exchange for external protons. This chain is Na(+)/H(+) antiporter NhaA, found in Escherichia coli O9:H4 (strain HS).